Reading from the N-terminus, the 210-residue chain is FMN-dependent NADH:quinone oxidoreductase 9 (210 aa).

Residues Ser-10 and 16–18 (SAS) contribute to the FMN site.

Belongs to the azoreductase type 1 family. In terms of assembly, homodimer. Requires FMN as cofactor.

It carries out the reaction 2 a quinone + NADH + H(+) = 2 a 1,4-benzosemiquinone + NAD(+). It catalyses the reaction N,N-dimethyl-1,4-phenylenediamine + anthranilate + 2 NAD(+) = 2-(4-dimethylaminophenyl)diazenylbenzoate + 2 NADH + 2 H(+). In terms of biological role, quinone reductase that provides resistance to thiol-specific stress caused by electrophilic quinones. Its function is as follows. Also exhibits azoreductase activity. Catalyzes the reductive cleavage of the azo bond in aromatic azo compounds to the corresponding amines. This chain is FMN-dependent NADH:quinone oxidoreductase 9, found in Burkholderia lata (strain ATCC 17760 / DSM 23089 / LMG 22485 / NCIMB 9086 / R18194 / 383).